A 349-amino-acid polypeptide reads, in one-letter code: Neutral protease 2 homolog ACLA_052720 (349 aa).

Residues Met-1–Ala-19 form the signal peptide. The propeptide occupies Ile-20–Arg-172. Disulfide bonds link Cys-178-Cys-250 and Cys-257-Cys-275. His-300 contacts Zn(2+). The active site involves Glu-301. Residues His-304 and Asp-315 each contribute to the Zn(2+) site.

Belongs to the peptidase M35 family. Zn(2+) is required as a cofactor.

It is found in the secreted. The catalysed reaction is Preferential cleavage of bonds with hydrophobic residues in P1'. Also 3-Asn-|-Gln-4 and 8-Gly-|-Ser-9 bonds in insulin B chain.. Functionally, secreted metalloproteinase that allows assimilation of proteinaceous substrates. Shows high activities on basic nuclear substrates such as histone and protamine. The sequence is that of Neutral protease 2 homolog ACLA_052720 from Aspergillus clavatus (strain ATCC 1007 / CBS 513.65 / DSM 816 / NCTC 3887 / NRRL 1 / QM 1276 / 107).